We begin with the raw amino-acid sequence, 918 residues long: Calcium-transporting ATPase type 2C member 1 (918 aa).

At 1–78 the chain is on the cytoplasmic side; the sequence is MKVARFQKIP…EPLWKKYISQ (78 aa). The chain crosses the membrane as a helical span at residues 79 to 95; it reads FKNPLIMLLLASAVISI. Topologically, residues 96–99 are extracellular; sequence LMRQ. A helical membrane pass occupies residues 100–121; it reads FDDAVSITVAIVIVVTVAFVQE. The Cytoplasmic portion of the chain corresponds to 122-262; sequence YRSEKSLEEL…PKTPLQKSMD (141 aa). Residues 263–282 form a helical membrane-spanning segment; it reads LLGKQLSFYSFGIIGIIMLV. Over 283-294 the chain is Extracellular; it reads GWLLGKDILEMF. A helical membrane pass occupies residues 295–316; that stretch reads TISVSLAVAAIPEGLPIVVTVT. The Cytoplasmic segment spans residues 317–699; it reads LALGVMRMVK…EGKGIYNNIK (383 aa). Asp349 serves as the catalytic 4-aspartylphosphate intermediate. The Mg(2+) site is built by Asp643 and Asp647. Residues 700–722 traverse the membrane as a helical segment; it reads NFVRFQLSTSIAALTLISLATLM. The Extracellular segment spans residues 723 to 727; it reads NFPNP. The helical transmembrane segment at 728–751 threads the bilayer; it reads LNAMQILWINIIMDGPPAQSLGVE. Residues 752 to 775 are Cytoplasmic-facing; that stretch reads PVDKDVIRKPPRNWKDSILTKNLI. The chain crosses the membrane as a helical span at residues 776 to 794; that stretch reads LKILVSSIIIVCGTLFVFW. Topologically, residues 795–801 are extracellular; the sequence is RELRDNV. A helical membrane pass occupies residues 802-827; it reads ITPRDTTMTFTCFVFFDMFNALSSRS. Over 828–842 the chain is Cytoplasmic; sequence QTKSVFEIGLCSNKM. The helical transmembrane segment at 843 to 862 threads the bilayer; sequence FCYAVLGSIMGQLLVIYFPP. The Extracellular portion of the chain corresponds to 863–875; the sequence is LQKVFQTESLSIL. Residues 876–892 traverse the membrane as a helical segment; the sequence is DLLFLLGLTSSVCIVSE. Residues 893–918 are Cytoplasmic-facing; it reads IIKKVERSREKVQKNAGSASSSFLEV.

Belongs to the cation transport ATPase (P-type) (TC 3.A.3) family. Type IIA subfamily. Monomer. Homodimer. Expressed in hippocampal neurons in the CA3 region of the Amon's horn (at protein level). Expressed in brain, heart, lung, stomach, liver, colon and mammary gland.

Its subcellular location is the golgi apparatus. The protein localises to the trans-Golgi network membrane. The protein resides in the golgi stack membrane. The catalysed reaction is Ca(2+)(in) + ATP + H2O = Ca(2+)(out) + ADP + phosphate + H(+). The enzyme catalyses Mn(2+)(in) + ATP + H2O = Mn(2+)(out) + ADP + phosphate + H(+). Its function is as follows. ATP-driven pump that supplies the Golgi apparatus with Ca(2+) and Mn(2+) ions, both essential cofactors for processing and trafficking of newly synthesized proteins in the secretory pathway. Within a catalytic cycle, acquires Ca(2+) or Mn(2+) ions on the cytoplasmic side of the membrane and delivers them to the lumenal side. The transfer of ions across the membrane is coupled to ATP hydrolysis and is associated with a transient phosphorylation that shifts the pump conformation from inward-facing to outward-facing state. Plays a primary role in the maintenance of Ca(2+) homeostasis in the trans-Golgi compartment with a functional impact on Golgi and post-Golgi protein sorting as well as a structural impact on cisternae morphology. Responsible for loading the Golgi stores with Ca(2+) ions in keratinocytes, contributing to keratinocyte differentiation and epidermis integrity. Participates in Ca(2+) and Mn(2+) ions uptake into the Golgi store of hippocampal neurons and regulates protein trafficking required for neural polarity. May also play a role in the maintenance of Ca(2+) and Mn(2+) homeostasis and signaling in the cytosol while preventing cytotoxicity. In Mus musculus (Mouse), this protein is Calcium-transporting ATPase type 2C member 1.